Here is a 580-residue protein sequence, read N- to C-terminus: Mucin-1 (580 aa).

The signal sequence occupies residues 1–22 (MTPDIQAPFLSLLLLFPVLTVA). Residues 23 to 489 (NVPTLTTSDS…GSGVPGWGIA (467 aa)) are Extracellular-facing. The segment covering 28-37 (TTSDSINPRR) has biased composition (polar residues). The segment at 28 to 359 (TTSDSINPRR…SIALSTSSNP (332 aa)) is disordered. A compositionally biased stretch (low complexity) spans 38 to 88 (TTPVSTTQSSPTSSPTKETSWSTTTTLLTASSPAPSPAASPGHDGASTPTS). Tandem repeats lie at residues 70–89 (PAPS…PTSS), 90–109 (PAPS…PTSS), 110–129 (PAPS…PTSS), 130–149 (PAPS…PTSS), 150–169 (PAPS…PTGS), 170–189 (PAPS…PTSS), 190–209 (PAPS…PTGS), 210–229 (PAPS…PTSS), 230–249 (PAPS…PTGS), 250–269 (PAPS…LTSS), and 270–289 (PAPS…PTSS). Residues 70–289 (PAPSPAASPG…QHGASSPTSS (220 aa)) form an 11 X 20 AA approximate tandem repeats of P-A-P-S-P-A-A-S-P-G-H-D-G-A-S-T-P-T-S-S region. S73, S77, and S84 each carry an O-linked (GalNAc...) serine glycan. T85 and T87 each carry an O-linked (GalNAc...) threonine glycan. Residues S88 and S89 are each glycosylated (O-linked (GalNAc...) serine). Composition is skewed to low complexity over residues 96–108 (ASPG…TPTS), 116–128 (ASPG…TPTS), 136–148 (ASPG…TPTS), 156–168 (ASPG…SPTG), 176–188 (ASPG…TPTS), 196–208 (ASPG…SPTG), 216–228 (ASPG…TPTS), 236–248 (ASPG…SPTG), and 256–306 (ASPG…MVTS). The N-linked (GlcNAc...) asparagine glycan is linked to N161. N201 is a glycosylation site (N-linked (GlcNAc...) asparagine). N241 is a glycosylation site (N-linked (GlcNAc...) asparagine). Positions 308–344 (HKGTSSRATMTPVSKGTPSSVPSSETAPTAASHITRT) are enriched in polar residues. Residues 345–357 (AASSPSIALSTSS) show a composition bias toward low complexity. The region spanning 368-475 (RVSLYFLSFR…VSVYSAPFPS (108 aa)) is the SEA domain. N384 and N460 each carry an N-linked (GlcNAc...) asparagine glycan. A helical membrane pass occupies residues 490 to 510 (LLVLVCVLVALAIIYLIALVV). S-palmitoyl cysteine attachment occurs at residues C511 and C513. Residues 511–580 (CQCGRKKCEQ…TNLAATSANL (70 aa)) are Cytoplasmic-facing. The interval 519–555 (EQLDVFPTLDAYHPMSEYSTYHTHGRYVPPGSTKRSP) is interaction with P53. Phosphotyrosine; by PDGFR is present on Y530. The short motif at 530-533 (YHPM) is the Interaction with GRB2 element. A Phosphotyrosine modification is found at Y539. The interval 544–563 (RYVPPGSTKRSPYEEVSAGN) is disordered. At Y545 the chain carries Phosphotyrosine; by PDGFR. Residues 550–557 (STKRSPYE) are required for interaction with GSK3B. Phosphothreonine; by PKC/PRKCD is present on T551. S554 bears the Phosphoserine; by GSK3-beta mark. Position 556 is a phosphotyrosine; by CSK, EGFR and SRC (Y556). The short motif at 556 to 559 (YEEV) is the Interaction with SRC and ESR1 element. Residues 560-568 (SAGNGGSNL) are required for interaction with beta- and gamma-catenins. Y570 is modified (phosphotyrosine). The Required for interaction with AP1S2 signature appears at 570–572 (YTN).

The alpha subunit forms a tight, non-covalent heterodimeric complex with the proteolytically-released beta subunit. Binds directly the SH2 domain of GRB2, and forms a MUC1/GRB2/SOS1 complex involved in RAS signaling. The cytoplasmic tail (MUC1CT) interacts with several proteins such as, SRC, CTNNB1 and ERBs. Interaction with the SH2 domain of CSK decreases interaction with GSK3B. Interacts with CTNNB1/beta-catenin and JUP/gamma-catenin and promotes cell adhesion. Interaction with JUP/gamma-catenin is induced by heregulin. Binds PRKCD, ERBB2, ERBB3 and ERBB4. Heregulin (HRG) stimulates the interaction with ERBB2 and, to a much lesser extent, the interaction with ERBB3 and ERBB4. Interacts with P53 in response to DNA damage. Interacts with KLF4. Interacts with estrogen receptor alpha/ESR1, through its DNA-binding domain, and stimulates its transcription activity. Binds ADAM17. Highly glycosylated (N- and O-linked carbohydrates and sialic acid). O-linked glycosylation consists mainly of GalNAc, galactose, and sialic acid. The ratio from pools of milk from different dairy breeds is GalNAc: GlcNAc:galactose:mannose:sialic acid is 14:1:10:1:15. In terms of processing, proteolytic cleavage in the SEA domain occurs in the endoplasmic reticulum by an autoproteolytic mechanism and requires the full-length SEA domain as well as requiring a Ser, Thr or Cys residue at the P + 1 site. Ectodomain shedding is mediated by ADAM17 in uterine epithelial cells. Post-translationally, dual palmitoylation on cysteine residues in the CQC motif is required for recycling from endosomes back to the plasma membrane. Phosphorylated on tyrosines and serine residues in the C-terminal. Phosphorylation on tyrosines in the C-terminal increases the nuclear location of MUC1 and beta-catenin. Phosphorylation by PKC delta induces binding of MUC1 to beta-catenin/CTNNB1 and thus decreases the formation of the beta-catenin/E-cadherin complex. Src-mediated phosphorylation inhibits interaction with GSK3B. Csk- or Src- or EGFR-mediated phosphorylation on Tyr-556 increases binding to beta-catenin/CTNNB1. GSK3B-mediated phosphorylation on Ser-554 decreases this interaction but restores the formation of the beta-cadherin/E-cadherin complex. On T-cell receptor activation, phosphorylated by LCK. PDGFR-mediated phosphorylation increases nuclear colocalization of MUC1CT and CTNNB1. In terms of tissue distribution, expressed on the apical surface of epithelia cells, and on the milk fat globule membrane (MGGM).

It localises to the apical cell membrane. Its subcellular location is the cell membrane. It is found in the cytoplasm. The protein resides in the nucleus. In terms of biological role, the alpha subunit has cell adhesive properties. May provide a protective layer on epithelial cells against bacterial and enzyme attack. The beta subunit contains a C-terminal domain which is involved in cell signaling, through phosphorylations and protein-protein interactions. Modulates signaling in ERK, Src and NF-kappa-B pathways. In activated T-cells, influences directly or indirectly the Ras/MAPK pathway. Promotes tumor progression. Regulates P53-mediated transcription and determines cell fate in the genotoxic stress response. Binds, together with KLF4, the PE21 promoter element of P53 and represses P53 activity. The polypeptide is Mucin-1 (MUC1) (Bos taurus (Bovine)).